The following is a 358-amino-acid chain: MRFSASLLLALTGSAAASPIRAEEEIRVYDLPISLFDDLQGLDAAMKAAGREYIGTSLTVRNDFQEQNIIRTEFGSITPENAQKWDATEPNRGQFTFGSADQHMDWARQNGKHVRCHTLVWYSQLPGWVSNSGFNNATLQQVMQNHINQVMGRYRGRCNHWDVVNEAPRLMAMRLQIGEAYIPIAFRMAAQADPSAKLYYNDYNLEYLGPKVEGAARIVRLVKQYGARIDGVGYQAHLVTEPTPTQSTPTPSEEDLIKALRITADLGVDVAYTEIDIRMRTPSNAQKLQQLADAYYRVARSCMKVPRCVGMTIWGVTDRYSWVPNTFRGEGDALLWDSNYQRKAAYNAFLRGIQEPVN.

Residues 1 to 17 (MRFSASLLLALTGSAAA) form the signal peptide. A GH10 domain is found at 40-352 (QGLDAAMKAA…KAAYNAFLRG (313 aa)). A glycan (N-linked (GlcNAc...) asparagine) is linked at Asn136. The active-site Proton donor is the Glu166. Catalysis depends on Glu274, which acts as the Nucleophile.

Belongs to the glycosyl hydrolase 10 (cellulase F) family.

It is found in the secreted. The enzyme catalyses Endohydrolysis of (1-&gt;4)-beta-D-xylosidic linkages in xylans.. Its pathway is glycan degradation; xylan degradation. Partial inhibition of activity is detected in the presence of Ag(+), Cu2(+) and SDS. Like most fungal xylanases, activity is completely inhibited by Hg(2+) since Hg(2+) could interact with tryptophan residues and oxidize the indole ring. Beta-mercaptoethanol enhances the enzymatic activity by counteracting the oxidation effects of the S-S linkage between cysteine residues. Its function is as follows. Endo-1,4-beta-xylanase involved in the hydrolysis of xylan, a major structural heterogeneous polysaccharide found in plant biomass representing the second most abundant polysaccharide in the biosphere, after cellulose. Is more active on soluble wheat arabinoxylan (defined as 100%) than on birchwood xylan (75.4%) and beechwood xylan (70.8%), and less active on insoluble wheat arabinoxylan (17.4%). Xylose is the major hydrolysis product of XynB. In Humicola insolens (Soft-rot fungus), this protein is Endo-1,4-beta-xylanase B.